The following is a 338-amino-acid chain: Phosphate acyltransferase (338 aa).

Belongs to the PlsX family. As to quaternary structure, homodimer. Probably interacts with PlsY.

The protein localises to the cytoplasm. It catalyses the reaction a fatty acyl-[ACP] + phosphate = an acyl phosphate + holo-[ACP]. It participates in lipid metabolism; phospholipid metabolism. Its function is as follows. Catalyzes the reversible formation of acyl-phosphate (acyl-PO(4)) from acyl-[acyl-carrier-protein] (acyl-ACP). This enzyme utilizes acyl-ACP as fatty acyl donor, but not acyl-CoA. The chain is Phosphate acyltransferase from Endomicrobium trichonymphae.